Consider the following 182-residue polypeptide: ADP-ribosylation factor-like protein 3 (182 aa).

G2 carries the N-myristoyl glycine lipid modification. S5 carries the phosphoserine modification. Residues 24-31, T48, 67-71, G70, 126-129, and 159-161 each bind GTP; these read GLDNAGKT, DIGGQ, NKQD, and SAL. Mg(2+) is bound by residues T31 and T48.

It belongs to the small GTPase superfamily. Arf family. As to quaternary structure, found in a complex with ARL3, RP2 and UNC119 (or UNC119B); RP2 induces hydrolysis of GTP ARL3 in the complex, leading to the release of UNC119 (or UNC119B). Interacts with RP2; interaction is direct and stimulated with the activated GTP-bound form of ARL3. Interacts with SYS1. Interacts with ARL2BP; the GTP-bound form interacts with ARL2BP. Microtubule-associated protein. Does not interact with TBCC. Interacts with RP2. Interacts with PDE6D; the interaction occurs specifically with the GTP-bound form of ARL3. Interacts with GGA1; the interaction recruits PKD1:PKD2 complex to trans-Golgi network and is required for ciliary targeting of PKD1:PKD2 complex. Interacts with DNAAF9.

Its subcellular location is the golgi apparatus membrane. It is found in the cytoplasm. The protein resides in the cytoskeleton. The protein localises to the spindle. It localises to the nucleus. Its subcellular location is the microtubule organizing center. It is found in the centrosome. The protein resides in the cell projection. The protein localises to the cilium. In terms of biological role, small GTP-binding protein which cycles between an inactive GDP-bound and an active GTP-bound form, and the rate of cycling is regulated by guanine nucleotide exchange factors (GEF) and GTPase-activating proteins (GAP). Required for normal cytokinesis and cilia signaling. Requires assistance from GTPase-activating proteins (GAPs) like RP2 and PDE6D, in order to cycle between inactive GDP-bound and active GTP-bound forms. Required for targeting proteins to the cilium, including myristoylated NPHP3 and prenylated INPP5E. Targets NPHP3 to the ciliary membrane by releasing myristoylated NPHP3 from UNC119B cargo adapter into the cilium. Required for PKD1:PKD2 complex targeting from the trans-Golgi network to the cilium. This Sus scrofa (Pig) protein is ADP-ribosylation factor-like protein 3 (ARL3).